The primary structure comprises 237 residues: N-(5'-phosphoribosyl)anthranilate isomerase (237 aa).

It belongs to the TrpF family.

The catalysed reaction is N-(5-phospho-beta-D-ribosyl)anthranilate = 1-(2-carboxyphenylamino)-1-deoxy-D-ribulose 5-phosphate. The protein operates within amino-acid biosynthesis; L-tryptophan biosynthesis; L-tryptophan from chorismate: step 3/5. The chain is N-(5'-phosphoribosyl)anthranilate isomerase (TRP1) from Komagataella pastoris (Yeast).